Reading from the N-terminus, the 313-residue chain is Porphobilinogen deaminase (313 aa).

At Cys242 the chain carries S-(dipyrrolylmethanemethyl)cysteine.

Belongs to the HMBS family. In terms of assembly, monomer. Dipyrromethane serves as cofactor.

The enzyme catalyses 4 porphobilinogen + H2O = hydroxymethylbilane + 4 NH4(+). It participates in porphyrin-containing compound metabolism; protoporphyrin-IX biosynthesis; coproporphyrinogen-III from 5-aminolevulinate: step 2/4. Tetrapolymerization of the monopyrrole PBG into the hydroxymethylbilane pre-uroporphyrinogen in several discrete steps. The sequence is that of Porphobilinogen deaminase from Salmonella arizonae (strain ATCC BAA-731 / CDC346-86 / RSK2980).